The sequence spans 347 residues: Isopentenyl-diphosphate delta-isomerase (347 aa).

9 to 10 (RK) serves as a coordination point for substrate. Residues 65-67 (AMT), Ser95, and Asn124 contribute to the FMN site. 95–97 (STH) contacts substrate. Position 154 (Gln154) interacts with substrate. Glu155 serves as a coordination point for Mg(2+). FMN is bound by residues Lys186, Ser211, Thr216, 262-264 (GVR), and 283-284 (SR).

Belongs to the IPP isomerase type 2 family. Homooctamer. Dimer of tetramers. The cofactor is FMN. NADPH is required as a cofactor. Requires Mg(2+) as cofactor.

The protein localises to the cytoplasm. The catalysed reaction is isopentenyl diphosphate = dimethylallyl diphosphate. In terms of biological role, involved in the biosynthesis of isoprenoids. Catalyzes the 1,3-allylic rearrangement of the homoallylic substrate isopentenyl (IPP) to its allylic isomer, dimethylallyl diphosphate (DMAPP). The protein is Isopentenyl-diphosphate delta-isomerase of Staphylococcus saprophyticus subsp. saprophyticus (strain ATCC 15305 / DSM 20229 / NCIMB 8711 / NCTC 7292 / S-41).